We begin with the raw amino-acid sequence, 560 residues long: Embryonal Fyn-associated substrate (560 aa).

The region spanning Thr-5–Ala-68 is the SH3 domain. Disordered stretches follow at residues Val-176–Ala-219 and Ala-241–Glu-372. The segment covering Ala-198–Arg-210 has biased composition (basic and acidic residues). Tyr-253 bears the Phosphotyrosine; by SRC mark. Residues Gly-259–Pro-268 show a composition bias toward pro residues. Short sequence motifs (SH3-binding) lie at residues Arg-304–Pro-310 and Arg-334–Pro-340. Residues Pro-305–Pro-315 are compositionally biased toward low complexity. Basic and acidic residues predominate over residues Pro-351–Ala-361. The divergent helix-loop-helix motif stretch occupies residues Phe-437 to Gly-487.

The protein belongs to the CAS family. In terms of processing, phosphorylated on multiple tyrosine residues. Phosphorylated on tyrosines by FYN and SRC. In terms of tissue distribution, widely expressed. Higher levels found in placenta and embryo. Lower levels found in brain, brainstem, muscle and lung. No expression in liver and intestine.

In terms of biological role, docking protein which plays a central coordinating role for tyrosine-kinase-based signaling related to cell adhesion. May serve as an activator of SRC and a downstream effector. Interacts with the SH3 domain of FYN and with CRK, SRC, and YES. This is Embryonal Fyn-associated substrate (Efs) from Mus musculus (Mouse).